Here is a 149-residue protein sequence, read N- to C-terminus: Transcriptional repressor NrdR (149 aa).

The segment at 3 to 34 is a zinc-finger region; it reads CPFCFAVDTKVIDSRLVGEGSSVRRRRQCLVC. Residues 49–139 enclose the ATP-cone domain; sequence PRVVKSNDVR…VYRSFEDIKE (91 aa).

The protein belongs to the NrdR family. It depends on Zn(2+) as a cofactor.

Negatively regulates transcription of bacterial ribonucleotide reductase nrd genes and operons by binding to NrdR-boxes. In Klebsiella pneumoniae (strain 342), this protein is Transcriptional repressor NrdR.